A 138-amino-acid polypeptide reads, in one-letter code: Sec-independent protein translocase protein TatB (138 aa).

The helical transmembrane segment at 1–21 (MFDIGFSELLLIAVVALVVLG) threads the bilayer. The disordered stretch occupies residues 116 to 138 (VHHVHVPPPSTSTHGNNGQEKSQ). A compositionally biased stretch (polar residues) spans 126–138 (TSTHGNNGQEKSQ).

This sequence belongs to the TatB family. The Tat system comprises two distinct complexes: a TatABC complex, containing multiple copies of TatA, TatB and TatC subunits, and a separate TatA complex, containing only TatA subunits. Substrates initially bind to the TatABC complex, which probably triggers association of the separate TatA complex to form the active translocon.

It localises to the cell inner membrane. In terms of biological role, part of the twin-arginine translocation (Tat) system that transports large folded proteins containing a characteristic twin-arginine motif in their signal peptide across membranes. Together with TatC, TatB is part of a receptor directly interacting with Tat signal peptides. TatB may form an oligomeric binding site that transiently accommodates folded Tat precursor proteins before their translocation. This chain is Sec-independent protein translocase protein TatB, found in Xylella fastidiosa (strain Temecula1 / ATCC 700964).